A 164-amino-acid polypeptide reads, in one-letter code: MEARTTDLSDLYPEGEALPMVFKSFGGRARFAGRVRTLRVFEDNALVRKVLEEEGAGQVLFVDGGGSLRTALLGGNLARLAWEKGWAGVVVHGAVRDTEELREVPIGLLALAATPKKSAKEGKGEVDVPLKVLGVEVLPGSFLLADEDGLLLLPEPPSGVRSGG.

Substrate-binding positions include 74–77 and Arg96; that span reads GGNL. Residue Asp97 coordinates a divalent metal cation.

This sequence belongs to the class II aldolase/RraA-like family. Homotrimer. Ni(2+) serves as cofactor. Co(2+) is required as a cofactor. The cofactor is Zn(2+).

It catalyses the reaction 4-hydroxy-4-methyl-2-oxoglutarate = 2 pyruvate. It carries out the reaction oxaloacetate + H(+) = pyruvate + CO2. Competitively inhibited by oxalate, a pyruvate enolate analog. Catalyzes the aldol cleavage of 4-hydroxy-4-methyl-2-oxoglutarate (HMG) into 2 molecules of pyruvate. Also contains a secondary oxaloacetate (OAA) decarboxylase activity due to the common pyruvate enolate transition state formed following C-C bond cleavage in the retro-aldol and decarboxylation reactions. In Thermus thermophilus (strain ATCC 27634 / DSM 579 / HB8), this protein is 4-hydroxy-4-methyl-2-oxoglutarate aldolase.